A 622-amino-acid chain; its full sequence is Type 2 DNA topoisomerase 6 subunit B (622 aa).

ATP-binding positions include N48, D80, S101–R102, G111–S118, and K435.

The protein belongs to the TOP6B family. Homodimer. Heterotetramer of two Top6A and two Top6B chains.

It catalyses the reaction ATP-dependent breakage, passage and rejoining of double-stranded DNA.. In terms of biological role, relaxes both positive and negative superturns and exhibits a strong decatenase activity. In Methanococcoides burtonii (strain DSM 6242 / NBRC 107633 / OCM 468 / ACE-M), this protein is Type 2 DNA topoisomerase 6 subunit B.